A 208-amino-acid chain; its full sequence is Probable GTP-binding protein EngB (208 aa).

The region spanning 29 to 203 (EGREVAFAGR…WDKLGEWLGI (175 aa)) is the EngB-type G domain. GTP is bound by residues 37-44 (GRSNAGKS), 64-68 (GRTQL), 82-85 (DLPG), 149-152 (TKAD), and 182-184 (FSA). Residues Ser44 and Thr66 each coordinate Mg(2+).

The protein belongs to the TRAFAC class TrmE-Era-EngA-EngB-Septin-like GTPase superfamily. EngB GTPase family. Mg(2+) serves as cofactor.

In terms of biological role, necessary for normal cell division and for the maintenance of normal septation. This is Probable GTP-binding protein EngB from Alcanivorax borkumensis (strain ATCC 700651 / DSM 11573 / NCIMB 13689 / SK2).